Here is a 115-residue protein sequence, read N- to C-terminus: Large ribosomal subunit protein bL19 (115 aa).

This sequence belongs to the bacterial ribosomal protein bL19 family.

In terms of biological role, this protein is located at the 30S-50S ribosomal subunit interface and may play a role in the structure and function of the aminoacyl-tRNA binding site. The sequence is that of Large ribosomal subunit protein bL19 from Nitrosococcus oceani (strain ATCC 19707 / BCRC 17464 / JCM 30415 / NCIMB 11848 / C-107).